The sequence spans 369 residues: MVYANNNIDPNAPCYVSECAELLSDKVGGVVLGCTDQWFAECVNLIKHSAPVWDAEKYVDTGKWMDGWETKRHNPDHDWCIIKLGIPGVIYGFEIDTAYFTGNYPPHASIEALCDDSDPNFNTLKESNNWEVILNKSDLGSSCKKYFECKVEKRFTHIKFRIYPDGGVARLRAYGRVVKDWTLVIPGELVDLAAIENGGLVTQVSDHFYGNKNNIIMPGRSVNMGDGWETKRRRGPGNDWLTVKLAKEGIVKRIEVDTNWFKGNFPTSCSIDAIHSSSAPDETHLQDYEWTNILPNSPLCGHRRHFFQNELVNNDKPFTHIRLNIFPDGGVSRLRINCSLPDSKNNNNNNNNNNNNNTSNSFKTSDRQQ.

Residues 341-369 (PDSKNNNNNNNNNNNNNTSNSFKTSDRQQ) form a disordered region. Low complexity predominate over residues 345 to 357 (NNNNNNNNNNNNN).

Belongs to the allantoicase family.

It carries out the reaction allantoate + H2O = (S)-ureidoglycolate + urea. It functions in the pathway nitrogen metabolism; (S)-allantoin degradation; (S)-ureidoglycolate from allantoate (aminidohydrolase route): step 1/1. In terms of biological role, utilization of purines as secondary nitrogen sources, when primary sources are limiting. This chain is Allantoicase (allC), found in Dictyostelium discoideum (Social amoeba).